The chain runs to 260 residues: Putative ABC transporter ATP-binding protein (260 aa).

The ABC transporter domain maps to 4-243 (ISMKNVTLKK…QVLENFYESP (240 aa)). Residue 36–43 (GLNGSGKT) participates in ATP binding.

It belongs to the ABC transporter superfamily.

The polypeptide is Putative ABC transporter ATP-binding protein (abcX) (Streptococcus mutans serotype c (strain ATCC 700610 / UA159)).